The primary structure comprises 92 residues: Neurophysin 2 (92 aa).

Disulfide bonds link C10–C54, C13–C27, C21–C44, C28–C34, C61–C73, C67–C85, and C74–C79.

Belongs to the vasopressin/oxytocin family. In terms of assembly, there is an equilibrium between the monomeric and dimeric forms. On peptide binding the dimeric form predominates. In terms of processing, a shorter neurophysin molecule (1-90) also exists and is probably derived from the complete protein by proteolytic degradation (in vivo or after extraction).

The protein resides in the secreted. Neurophysin 2 specifically binds vasopressin. This is Neurophysin 2 (AVP) from Loxodonta africana (African elephant).